Here is a 545-residue protein sequence, read N- to C-terminus: Cytochrome bc1 complex cytochrome b subunit (545 aa).

A helical transmembrane segment spans residues 54-74; it reads VCLYSFIIIILTGVYLTLFFH. Histidine 118 and histidine 132 together coordinate heme. 3 helical membrane-spanning segments follow: residues 122–142, 150–170, and 182–202; these read ALIF…TGAF, WLFG…GYSL, and FMEG…FFLF. Histidine 219 and histidine 234 together coordinate heme. The next 5 membrane-spanning stretches (helical) occupy residues 220 to 240, 269 to 289, 335 to 355, 385 to 405, and 413 to 433; these read ILLL…LVFY, AGGF…IATI, LVLG…AIAV, FGVA…NDLW, and INAI…VAFI.

Belongs to the cytochrome b family. The cytochrome bc1 complex is composed of a cytochrome b (QcrB), the Rieske iron-sulfur protein (QcrA) and a diheme cytochrome c (QcrC) subunit. Heme serves as cofactor.

The protein resides in the cell membrane. The enzyme catalyses a quinol + 2 Fe(III)-[cytochrome c](out) = a quinone + 2 Fe(II)-[cytochrome c](out) + 2 H(+)(out). Functionally, cytochrome b subunit of the cytochrome bc1 complex, an essential component of the respiratory electron transport chain required for ATP synthesis. The bc1 complex catalyzes the oxidation of ubiquinol and the reduction of cytochrome c in the respiratory chain. The bc1 complex operates through a Q-cycle mechanism that couples electron transfer to generation of the proton gradient that drives ATP synthesis. The cytochrome b subunit contains two ubiquinol reactive sites: the oxidation (QP) site and the reduction (QN) site. The sequence is that of Cytochrome bc1 complex cytochrome b subunit (qcrB) from Streptomyces coelicolor (strain ATCC BAA-471 / A3(2) / M145).